Consider the following 533-residue polypeptide: Beta-1,4 N-acetylgalactosaminyltransferase 1 (533 aa).

The Cytoplasmic portion of the chain corresponds to 1 to 7 (MWLGRRA). Residues 8 to 25 (LCALVLLLACASLGLLYA) traverse the membrane as a helical; Signal-anchor for type II membrane protein segment. Residues 26 to 533 (STRDAPGLRL…KHRLQCMTSQ (508 aa)) lie on the Lumenal side of the membrane. N-linked (GlcNAc...) asparagine glycosylation is found at asparagine 79, asparagine 179, and asparagine 274. An intrachain disulfide couples cysteine 429 to cysteine 476.

The protein belongs to the glycosyltransferase 2 family. In terms of assembly, homodimer; disulfide-linked.

Its subcellular location is the golgi apparatus membrane. The enzyme catalyses a ganglioside GM3 (d18:1(4E)) + UDP-N-acetyl-alpha-D-galactosamine = a ganglioside GM2 (d18:1(4E)) + UDP + H(+). It carries out the reaction a ganglioside GM3 + UDP-N-acetyl-alpha-D-galactosamine = a ganglioside GM2 + UDP + H(+). It catalyses the reaction a ganglioside GD3 + UDP-N-acetyl-alpha-D-galactosamine = a ganglioside GD2 + UDP + H(+). The catalysed reaction is a ganglioside GD3 (d18:1(4E)) + UDP-N-acetyl-alpha-D-galactosamine = a ganglioside GD2 (d18:1(4E)) + UDP + H(+). The enzyme catalyses a beta-D-Gal-(1-&gt;4)-beta-D-Glc-(1&lt;-&gt;1)-Cer(d18:1(4E)) + UDP-N-acetyl-alpha-D-galactosamine = a ganglioside GA2 (d18:1(4E)) + UDP + H(+). It carries out the reaction a ganglioside GD1a + UDP-N-acetyl-alpha-D-galactosamine = a ganglioside GalNAc-GD1a + UDP + H(+). It catalyses the reaction a ganglioside GT3 (d18:1(4E)) + UDP-N-acetyl-alpha-D-galactosamine = a ganglioside GT2 (d18:1(4E)) + UDP + H(+). The catalysed reaction is a beta-D-galactosyl-(1-&gt;4)-beta-D-glucosyl-(1&lt;-&gt;1)-ceramide + UDP-N-acetyl-alpha-D-galactosamine = a ganglioside GA2 + UDP + H(+). The enzyme catalyses a neolactoside IV(3)-alpha-NeuGc-nLc4Cer + UDP-N-acetyl-alpha-D-galactosamine = a neolactoside IV(4)-beta-GalNAc-IV(3)-alpha-NeuGc-nLc4Cer + UDP + H(+). Its pathway is sphingolipid metabolism. In terms of biological role, involved in the biosynthesis of gangliosides GM2, GD2, GT2 and GA2 from GM3, GD3, GT3 and GA3, respectively. The polypeptide is Beta-1,4 N-acetylgalactosaminyltransferase 1 (Homo sapiens (Human)).